We begin with the raw amino-acid sequence, 303 residues long: Cathepsin B-like CP1 (303 aa).

A signal peptide spans 1–19 (MALSLLLAVVCAKPLVSRA). The N-linked (GlcNAc...) asparagine glycan is linked to Asn41. Disulfide bonds link Cys92–Cys119, Cys102–Cys145, and Cys138–Cys181. Cys105 is an active-site residue. Residues His249 and Asn270 contribute to the active site.

This sequence belongs to the peptidase C1 family.

The protein resides in the vacuole. Thiol protease which is required for parasite excystation and invasion of the proximal small intestine of the human host. The polypeptide is Cathepsin B-like CP1 (CP1) (Giardia intestinalis (Giardia lamblia)).